The primary structure comprises 330 residues: Exostosin-like 2 (330 aa).

Over Met1–Ser22 the chain is Cytoplasmic. A helical; Signal-anchor for type II membrane protein transmembrane segment spans residues Leu23–Val43. Residues Lys44–Ile330 are Lumenal-facing. Residue Gln71 coordinates UDP-N-acetyl-alpha-D-galactosamine. Gln71 contributes to the UDP-N-acetyl-alpha-D-glucosamine binding site. An N-linked (GlcNAc...) asparagine glycan is attached at Asn74. The UDP-N-acetyl-alpha-D-galactosamine site is built by Arg75, Asn100, Asn129, Arg134, Asp150, Asp151, Asp152, and Asp244. Residues Arg75, Asn100, Asn129, Arg134, Asp150, Asp151, Asp152, Asp244, Asp245, and Arg293 each contribute to the UDP-N-acetyl-alpha-D-glucosamine site. Mn(2+) is bound at residue Asp152. Cys243 and Cys296 form a disulfide bridge. Asp245 is an active-site residue. Arg293 contributes to the UDP-N-acetyl-alpha-D-galactosamine binding site.

It belongs to the glycosyltransferase 47 family. It depends on Mn(2+) as a cofactor. Post-translationally, the soluble form derives from the membrane form by proteolytic processing. Ubiquitous.

The protein resides in the endoplasmic reticulum membrane. The protein localises to the secreted. The enzyme catalyses 3-O-(beta-D-GlcA-(1-&gt;3)-beta-D-Gal-(1-&gt;3)-beta-D-Gal-(1-&gt;4)-beta-D-Xyl)-L-seryl-[protein] + UDP-N-acetyl-alpha-D-glucosamine = 3-O-(alpha-D-GlcNAc-(1-&gt;4)-beta-D-GlcA-(1-&gt;3)-beta-D-Gal-(1-&gt;3)-beta-D-Gal-(1-&gt;4)-beta-D-Xyl)-L-seryl-[protein] + UDP + H(+). The protein operates within glycan metabolism; heparan sulfate biosynthesis. Glycosyltransferase required for the biosynthesis of heparan-sulfate and responsible for the alternating addition of beta-1-4-linked glucuronic acid (GlcA) and alpha-1-4-linked N-acetylglucosamine (GlcNAc) units to nascent heparan sulfate chains. The protein is Exostosin-like 2 (EXTL2) of Homo sapiens (Human).